The following is a 249-amino-acid chain: 5'-nucleotidase SurE (249 aa).

The a divalent metal cation site is built by Asp8, Asp9, Ser39, and Asn91.

This sequence belongs to the SurE nucleotidase family. A divalent metal cation is required as a cofactor.

The protein resides in the cytoplasm. It catalyses the reaction a ribonucleoside 5'-phosphate + H2O = a ribonucleoside + phosphate. Functionally, nucleotidase that shows phosphatase activity on nucleoside 5'-monophosphates. The protein is 5'-nucleotidase SurE of Pseudomonas aeruginosa (strain UCBPP-PA14).